The primary structure comprises 292 residues: ATP synthase gamma chain (292 aa).

The protein belongs to the ATPase gamma chain family. In terms of assembly, F-type ATPases have 2 components, CF(1) - the catalytic core - and CF(0) - the membrane proton channel. CF(1) has five subunits: alpha(3), beta(3), gamma(1), delta(1), epsilon(1). CF(0) has three main subunits: a, b and c.

It localises to the cell inner membrane. Functionally, produces ATP from ADP in the presence of a proton gradient across the membrane. The gamma chain is believed to be important in regulating ATPase activity and the flow of protons through the CF(0) complex. The sequence is that of ATP synthase gamma chain from Hydrogenobaculum sp. (strain Y04AAS1).